Consider the following 92-residue polypeptide: Small ribosomal subunit protein uS19 (92 aa).

It belongs to the universal ribosomal protein uS19 family.

In terms of biological role, protein S19 forms a complex with S13 that binds strongly to the 16S ribosomal RNA. This is Small ribosomal subunit protein uS19 from Bacillus cytotoxicus (strain DSM 22905 / CIP 110041 / 391-98 / NVH 391-98).